Reading from the N-terminus, the 626-residue chain is UvrABC system protein C (626 aa).

The 80-residue stretch at 26–105 (PEPGVYFMRD…IKQHQPHFNV (80 aa)) folds into the GIY-YIG domain. The region spanning 215–250 (SELINTLSLQMEQAAEDLNFEQAARLRDQIKGLQGL) is the UVR domain.

The protein belongs to the UvrC family. As to quaternary structure, interacts with UvrB in an incision complex.

The protein resides in the cytoplasm. In terms of biological role, the UvrABC repair system catalyzes the recognition and processing of DNA lesions. UvrC both incises the 5' and 3' sides of the lesion. The N-terminal half is responsible for the 3' incision and the C-terminal half is responsible for the 5' incision. The protein is UvrABC system protein C of Acaryochloris marina (strain MBIC 11017).